The following is a 355-amino-acid chain: Glucose-6-phosphatase 2 (355 aa).

The Lumenal segment spans residues 1–24; the sequence is MDFLHRSGVLIIHHLQEDYRTYYG. The helical transmembrane segment at 25-45 threads the bilayer; that stretch reads FLNFMSNVGDPRNIFSIYFPL. The Cytoplasmic portion of the chain corresponds to 46–56; that stretch reads WFQLNQNVGTK. A helical transmembrane segment spans residues 57–77; that stretch reads MIWVAVIGDWFNLIFKWILFG. At 78-115 the chain is on the lumenal side; that stretch reads HRPYWWIQETEIYPNHSSPCLEQFPTTCETGPGSPSGH. Arg79 lines the substrate pocket. Asn92 is a glycosylation site (N-linked (GlcNAc...) asparagine). The active-site Proton donor is the His115. The helical transmembrane segment at 116 to 136 threads the bilayer; the sequence is AMGSSCVWYVMVTAALSYTIS. Residues 137 to 146 are Cytoplasmic-facing; it reads RMEESSVTLH. A helical transmembrane segment spans residues 147–167; that stretch reads RLTWSFLWSVFWLIQISVCIS. A topological domain (lumenal) is located at residue Arg168. Residue Arg168 participates in substrate binding. The helical transmembrane segment at 169–189 threads the bilayer; the sequence is VFIATHFPHQVILGVIGGMLV. His174 (nucleophile) is an active-site residue. The Cytoplasmic segment spans residues 190–211; sequence AEAFEHTPGVHMASLSVYLKTN. A helical membrane pass occupies residues 212-232; the sequence is VFLFLFALGFYLLLRLFGIDL. The Lumenal segment spans residues 233 to 252; it reads LWSVPIAKKWCANPDWIHID. A helical membrane pass occupies residues 253 to 273; it reads STPFAGLVRNLGVLFGLGFAI. Topologically, residues 274 to 290 are cytoplasmic; that stretch reads NSEMFLRSCQGENGTKP. A helical membrane pass occupies residues 291-307; the sequence is SFRLLCALTSLTTMQLY. The Lumenal portion of the chain corresponds to 308 to 318; it reads RFIKIPTHAEP. A helical transmembrane segment spans residues 319–339; sequence LFYLLSFCKSASIPLMVVALI. The Cytoplasmic portion of the chain corresponds to 340–355; it reads PYCVHMLMRPGDKKTK. A Prevents secretion from ER motif is present at residues 352-355; it reads KKTK.

It belongs to the glucose-6-phosphatase family. In terms of processing, N-glycosylated; the non-glycosylated form is more unstable and is degraded through the proteasome. Specifically expressed in pancreatic islet cells, in particular those of beta-cell origin. Not detected in testis, kidney, muscle, liver, lung, spleen, brain, pituitary, gastric fundus or heart.

The protein resides in the endoplasmic reticulum membrane. It carries out the reaction D-glucose 6-phosphate + H2O = D-glucose + phosphate. Its pathway is carbohydrate biosynthesis; gluconeogenesis. In terms of biological role, may hydrolyze glucose-6-phosphate to glucose in the endoplasmic reticulum. May be responsible for glucose production through glycogenolysis and gluconeogenesis. The polypeptide is Glucose-6-phosphatase 2 (G6pc2) (Mus musculus (Mouse)).